The following is a 372-amino-acid chain: Lipoyl synthase, mitochondrial (372 aa).

Cys103, Cys108, Cys114, Cys134, Cys138, Cys141, and Ser349 together coordinate [4Fe-4S] cluster. One can recognise a Radical SAM core domain in the interval 119-338; that stretch reads EHGTQTATIM…EERGNQLGFL (220 aa).

It belongs to the radical SAM superfamily. Lipoyl synthase family. [4Fe-4S] cluster is required as a cofactor.

It localises to the mitochondrion. The catalysed reaction is [[Fe-S] cluster scaffold protein carrying a second [4Fe-4S](2+) cluster] + N(6)-octanoyl-L-lysyl-[protein] + 2 oxidized [2Fe-2S]-[ferredoxin] + 2 S-adenosyl-L-methionine + 4 H(+) = [[Fe-S] cluster scaffold protein] + N(6)-[(R)-dihydrolipoyl]-L-lysyl-[protein] + 4 Fe(3+) + 2 hydrogen sulfide + 2 5'-deoxyadenosine + 2 L-methionine + 2 reduced [2Fe-2S]-[ferredoxin]. Its pathway is protein modification; protein lipoylation via endogenous pathway; protein N(6)-(lipoyl)lysine from octanoyl-[acyl-carrier-protein]: step 2/2. Its function is as follows. Catalyzes the radical-mediated insertion of two sulfur atoms into the C-6 and C-8 positions of the octanoyl moiety bound to the lipoyl domains of lipoate-dependent enzymes, thereby converting the octanoylated domains into lipoylated derivatives. In Drosophila willistoni (Fruit fly), this protein is Lipoyl synthase, mitochondrial.